A 222-amino-acid polypeptide reads, in one-letter code: Methylthioribulose-1-phosphate dehydratase (222 aa).

2 residues coordinate Zn(2+): H94 and H96.

The protein belongs to the aldolase class II family. MtnB subfamily. It depends on Zn(2+) as a cofactor.

The enzyme catalyses 5-(methylsulfanyl)-D-ribulose 1-phosphate = 5-methylsulfanyl-2,3-dioxopentyl phosphate + H2O. It participates in amino-acid biosynthesis; L-methionine biosynthesis via salvage pathway; L-methionine from S-methyl-5-thio-alpha-D-ribose 1-phosphate: step 2/6. Functionally, catalyzes the dehydration of methylthioribulose-1-phosphate (MTRu-1-P) into 2,3-diketo-5-methylthiopentyl-1-phosphate (DK-MTP-1-P). The chain is Methylthioribulose-1-phosphate dehydratase from Yersinia pseudotuberculosis serotype IB (strain PB1/+).